The following is a 256-amino-acid chain: CCAAT/enhancer-binding protein delta (256 aa).

Position 2 is an N-acetylserine (serine 2). Disordered stretches follow at residues threonine 18–alanine 40, glycine 92–serine 121, and alanine 139–methionine 206. A Glycyl lysine isopeptide (Lys-Gly) (interchain with G-Cter in SUMO) cross-link involves residue lysine 108. The span at proline 143 to glycine 162 shows a compositional bias: pro residues. The span at alanine 164–asparagine 188 shows a compositional bias: basic and acidic residues. A bZIP domain is found at serine 178–leucine 241. A basic motif region spans residues arginine 182–lysine 209. A leucine-zipper region spans residues leucine 213 to leucine 241.

This sequence belongs to the bZIP family. C/EBP subfamily. As to quaternary structure, binds DNA as a homodimer and as a heterodimer. Can form stable heterodimers with CEBPB. Can form stable heterodimers with CEBPA and CEBPE. Directly interacts with SPI1/PU.1; this interaction does not affect DNA-binding properties of each partner. Interacts with PRDM16.

The protein resides in the nucleus. Functionally, transcription activator that recognizes two different DNA motifs: the CCAAT homology common to many promoters and the enhanced core homology common to many enhancers. Important transcription factor regulating the expression of genes involved in immune and inflammatory responses. Transcriptional activator that enhances IL6 transcription alone and as heterodimer with CEBPB. The polypeptide is CCAAT/enhancer-binding protein delta (CEBPD) (Bos taurus (Bovine)).